We begin with the raw amino-acid sequence, 438 residues long: Adenosylhomocysteinase (438 aa).

Substrate-binding residues include T61, D137, and E162. Residue 163–165 (TTT) participates in NAD(+) binding. The substrate site is built by K192 and D196. NAD(+) is bound by residues N197, 226–231 (GYGDVG), E249, N284, 305–307 (IGH), and N352.

Belongs to the adenosylhomocysteinase family. Requires NAD(+) as cofactor.

The protein resides in the cytoplasm. It catalyses the reaction S-adenosyl-L-homocysteine + H2O = L-homocysteine + adenosine. Its pathway is amino-acid biosynthesis; L-homocysteine biosynthesis; L-homocysteine from S-adenosyl-L-homocysteine: step 1/1. In terms of biological role, may play a key role in the regulation of the intracellular concentration of adenosylhomocysteine. The sequence is that of Adenosylhomocysteinase from Christiangramia forsetii (strain DSM 17595 / CGMCC 1.15422 / KT0803) (Gramella forsetii).